The chain runs to 347 residues: Heat-inducible transcription repressor HrcA (347 aa).

This sequence belongs to the HrcA family.

Functionally, negative regulator of class I heat shock genes (grpE-dnaK-dnaJ and groELS operons). Prevents heat-shock induction of these operons. The polypeptide is Heat-inducible transcription repressor HrcA (Laribacter hongkongensis (strain HLHK9)).